The chain runs to 237 residues: 1-(5-phosphoribosyl)-5-[(5-phosphoribosylamino)methylideneamino] imidazole-4-carboxamide isomerase (237 aa).

Asp8 (proton acceptor) is an active-site residue. Catalysis depends on Asp129, which acts as the Proton donor.

The protein belongs to the HisA/HisF family.

It is found in the cytoplasm. It carries out the reaction 1-(5-phospho-beta-D-ribosyl)-5-[(5-phospho-beta-D-ribosylamino)methylideneamino]imidazole-4-carboxamide = 5-[(5-phospho-1-deoxy-D-ribulos-1-ylimino)methylamino]-1-(5-phospho-beta-D-ribosyl)imidazole-4-carboxamide. The protein operates within amino-acid biosynthesis; L-histidine biosynthesis; L-histidine from 5-phospho-alpha-D-ribose 1-diphosphate: step 4/9. This Roseiflexus sp. (strain RS-1) protein is 1-(5-phosphoribosyl)-5-[(5-phosphoribosylamino)methylideneamino] imidazole-4-carboxamide isomerase.